We begin with the raw amino-acid sequence, 62 residues long: Beta-defensin 110 (62 aa).

The N-terminal stretch at 1-21 is a signal peptide; the sequence is MKIHLFFFILLFWVTILPARS. Cystine bridges form between Cys-32–Cys-60, Cys-39–Cys-53, and Cys-43–Cys-61.

It belongs to the beta-defensin family.

The protein localises to the secreted. Has antibacterial activity. The chain is Beta-defensin 110 (DEFB110) from Canis lupus familiaris (Dog).